A 633-amino-acid polypeptide reads, in one-letter code: MHCMAVHQFSPSIVSSLPTISTYNNNHFCRFFTPKTSISPISKTKSKSSTCYPIQCTVVNNSSPSSTIVRRSANYEPPIWSFDYIQSLSTQYKGESYTRQLNKLKKEVTRMLLGLEINSLALLELIDTLQRLGISYHFKNEINTILKKKYTDNYINNNNIITNPNYNNLYAIALEFRLLRQHGYTVPQEIFNAFKDKRGKFKTCLSDDIMGVLCLYEASFYAMKHENILEETRIFSTKCLKKYMEKMENEEEKKILLLDDNNINSNLLLINHAFELPLHWRITRSEARWFIDEIYEKKQDMNSTLFEFAKLDFNIVQSTHQEDLQHLSRWWRDCKLGGKLNFARDRLMEAFLWDVGLKFEGEFSYFRRINARLFVLITIIDDIYDVYGTLEELELFTSAVERWDVKLINELPDYMKMPFFVLHNTINEMGFDVLVQQNFVNIEYLKKSWVDLCKCYLQEAKWYYSGYQPTLEEYTELGWLSIGASVILMHAYFCLTNPITKQDLKSLQLQHHYPNIIKQACLITRLADDLGTSSDELNRGDVPKSIQCYMYDNNATEDEAREHIKFLISETWKDMNKKDEDESCLSENFVEVCKNMARTALFIYENGDGHGSQNSLSKERISTLIITPINIPK.

Residues 1-55 (MHCMAVHQFSPSIVSSLPTISTYNNNHFCRFFTPKTSISPISKTKSKSSTCYPIQ) constitute a chloroplast transit peptide. The (2E)-geranyl diphosphate site is built by arginine 344, aspartate 381, aspartate 385, arginine 525, and aspartate 528. The Mg(2+) site is built by aspartate 381 and aspartate 385. Residues 381 to 385 (DDIYD) carry the DDXXD motif motif. Mg(2+)-binding residues include aspartate 528, threonine 532, and glutamate 536.

It belongs to the terpene synthase family. Tpsb subfamily. Requires Mg(2+) as cofactor. It depends on Mn(2+) as a cofactor.

The protein localises to the plastid. The protein resides in the chloroplast. It carries out the reaction (2E)-geranyl diphosphate = beta-myrcene + diphosphate. It participates in secondary metabolite biosynthesis; terpenoid biosynthesis. Its function is as follows. Involved in monoterpene (C10) olefins biosynthesis, constituants of cannabinoids and terpenoids-rich resins. Catalyzes strictly the conversion of (2E)-geranyl diphosphate to beta-myrcene. This Cannabis sativa (Hemp) protein is Beta-myrcene synthase TPS15CT.